Consider the following 201-residue polypeptide: Large ribosomal subunit protein bL25 (201 aa).

This sequence belongs to the bacterial ribosomal protein bL25 family. CTC subfamily. As to quaternary structure, part of the 50S ribosomal subunit; part of the 5S rRNA/L5/L18/L25 subcomplex. Contacts the 5S rRNA. Binds to the 5S rRNA independently of L5 and L18.

In terms of biological role, this is one of the proteins that binds to the 5S RNA in the ribosome where it forms part of the central protuberance. This is Large ribosomal subunit protein bL25 from Burkholderia lata (strain ATCC 17760 / DSM 23089 / LMG 22485 / NCIMB 9086 / R18194 / 383).